The sequence spans 388 residues: Galactokinase (388 aa).

33 to 36 lines the substrate pocket; it reads EHTD. ATP contacts are provided by residues Ser-67 and 125–131; that span reads GAGLSSS. Positions 131 and 163 each coordinate Mg(2+). The active-site Proton acceptor is Asp-175. Tyr-225 is a binding site for substrate.

It belongs to the GHMP kinase family. GalK subfamily.

The protein localises to the cytoplasm. The catalysed reaction is alpha-D-galactose + ATP = alpha-D-galactose 1-phosphate + ADP + H(+). It functions in the pathway carbohydrate metabolism; galactose metabolism. Catalyzes the transfer of the gamma-phosphate of ATP to D-galactose to form alpha-D-galactose-1-phosphate (Gal-1-P). This chain is Galactokinase, found in Limosilactobacillus fermentum (strain NBRC 3956 / LMG 18251) (Lactobacillus fermentum).